We begin with the raw amino-acid sequence, 827 residues long: Putative potassium transporter 12 (827 aa).

The tract at residues 1–31 (MEEIEEGSSNNSIRRVGTGSSDRRWVDGSEV) is disordered. Residues 1 to 82 (MEEIEEGSSN…AGSHGHNLKD (82 aa)) are Cytoplasmic-facing. A helical transmembrane segment spans residues 83–103 (LSLLTTLGIAFQTLGVVYGDM). Topologically, residues 104–129 (GTSPLYVFSDVFSKVPIRSEVDVLGA) are extracellular. The helical transmembrane segment at 130–150 (LSLVIYTIAVIPLAKYVFVVL) threads the bilayer. Residues 151-216 (KANDNGEGGT…ALETKGYLKT (66 aa)) lie on the Cytoplasmic side of the membrane. A helical transmembrane segment spans residues 217-237 (LLLLLVLMGTSMIIGDGILTP). The Extracellular portion of the chain corresponds to 238–253 (AMSVMSAMSGLQGEVK). The helical transmembrane segment at 254–274 (GFGTNALVMSSIVILVALFSI) threads the bilayer. Residues 275 to 281 (QRFGTGK) are Cytoplasmic-facing. The helical transmembrane segment at 282–302 (VGFLFAPVLALWFFSLGAIGI) threads the bilayer. Over 303-335 (YNLLKYDFTVIRALNPFYIVLFFNKNSKQAWSA) the chain is Extracellular. The chain crosses the membrane as a helical span at residues 336-356 (LGGCVLCITGAEAMFADLGHF). Residues 357-363 (SVRSIQM) lie on the Cytoplasmic side of the membrane. The chain crosses the membrane as a helical span at residues 364–384 (AFTCVVFPCLLLAYMGQAAYL). Residues 385–402 (TKHPEASARIFYDSVPKS) lie on the Extracellular side of the membrane. A helical transmembrane segment spans residues 403-423 (LFWPVFVIATLAAMIASQAMI). Over 424–454 (SATFSCVKQAMALGCFPRLKIIHTSKKRIGQ) the chain is Cytoplasmic. Residues 455–475 (IYIPVINWFLMIMCILVVSIF) form a helical membrane-spanning segment. Over 476 to 480 (RSTTH) the chain is Extracellular. 2 helical membrane-spanning segments follow: residues 481-501 (IANA…VLVT) and 502-522 (LVML…PLIF). Topologically, residues 523–536 (GSVETIYLLAVLTK) are extracellular. Residues 537–557 (ILEGGWVPLVFATFFLTVMYI) form a helical membrane-spanning segment. Residues 558-827 (WNYGSVLKYQ…ILQAGMTYMV (270 aa)) are Cytoplasmic-facing. Residues 728 to 750 (RSEPEQELDSEVLPSSSVGSSME) are disordered. Positions 738 to 748 (EVLPSSSVGSS) are enriched in low complexity.

The protein belongs to the HAK/KUP transporter (TC 2.A.72.3) family.

The protein resides in the cell membrane. Putative potassium transporter. The chain is Putative potassium transporter 12 (POT12) from Arabidopsis thaliana (Mouse-ear cress).